A 149-amino-acid chain; its full sequence is Ribosomal RNA large subunit methyltransferase H (149 aa).

S-adenosyl-L-methionine-binding positions include Leu71, Gly98, and 117–122 (LSKMTL).

Belongs to the RNA methyltransferase RlmH family. Homodimer.

It is found in the cytoplasm. It catalyses the reaction pseudouridine(1915) in 23S rRNA + S-adenosyl-L-methionine = N(3)-methylpseudouridine(1915) in 23S rRNA + S-adenosyl-L-homocysteine + H(+). In terms of biological role, specifically methylates the pseudouridine at position 1915 (m3Psi1915) in 23S rRNA. The chain is Ribosomal RNA large subunit methyltransferase H from Campylobacter fetus subsp. fetus (strain 82-40).